The following is a 4151-amino-acid chain: Mycoketide-CoA synthase (4151 aa).

Residues 2 to 32 (VDQLQHATEALRKALVQVERLKRTNRALLER) adopt a coiled-coil conformation. In terms of domain architecture, Ketosynthase family 3 (KS3) 1 spans 34-457 (SEPIAIVGMS…GTNAHVIIEA (424 aa)). Module stretches follow at residues 35–2038 (EPIA…RTEL) and 2057–4070 (DPIA…RREL). The active-site Acyl-thioester intermediate; for beta-ketoacyl synthase 1 activity is Cys203. Active-site for beta-ketoacyl synthase 1 activity residues include His338 and His379. The interval 559 to 880 (VFVFPGQGSQ…AASAFVAGVA (322 aa)) is acyltransferase 1. The Acyl-ester intermediate; for acyltransferase 1 activity role is filled by Ser650. The interval 926–1048 (HPLLGAVVDL…GILRPGSVEP (123 aa)) is N-terminal hotdog fold 1. The segment at 926-1194 (HPLLGAVVDL…VARPVTERQL (269 aa)) is dehydratase 1. The PKS/mFAS DH 1 domain occupies 926-1195 (HPLLGAVVDL…ARPVTERQLL (270 aa)). His958 (proton acceptor; for dehydratase activity 1) is an active-site residue. The segment at 1060-1195 (AVTVDVADGY…ARPVTERQLL (136 aa)) is C-terminal hotdog fold 1. Asp1120 (proton donor; for dehydratase activity 1) is an active-site residue. The enoyl reductase 1 stretch occupies residues 1366–1671 (GTFENLRLEP…QARHTGKVVM (306 aa)). The interval 1680–1858 (GTVLITGGTG…AISLGWGLWD (179 aa)) is beta-ketoacyl reductase 1. Tyr1828 serves as the catalytic For beta-ketoacyl reductase 1 activity. The Carrier 1 domain occupies 1963-2038 (AVLLGLVRLH…RLASYIRTEL (76 aa)). Ser1998 is modified (O-(pantetheine 4'-phosphoryl)serine). One can recognise a Ketosynthase family 3 (KS3) 2 domain in the interval 2056-2480 (EDPIAIVGMA…GTNAHVIIEA (425 aa)). The active-site Acyl-thioester intermediate; for beta-ketoacyl synthase 2 activity is Cys2226. Active-site for beta-ketoacyl synthase 2 activity residues include His2361 and His2402. The tract at residues 2582-2893 (VFVFPGQGSQ…AVAQGFVTGM (312 aa)) is acyltransferase 2. Catalysis depends on Ser2672, which acts as the Acyl-ester intermediate; for acyltransferase 2 activity. An N-terminal hotdog fold 2 region spans residues 2940–3062 (HALLGAVIDL…GALRAGSAEP (123 aa)). Residues 2940–3215 (HALLGAVIDL…ARPVTDQQLR (276 aa)) are dehydratase 2. The 276-residue stretch at 2940–3215 (HALLGAVIDL…ARPVTDQQLR (276 aa)) folds into the PKS/mFAS DH 2 domain. His2972 (proton acceptor; for dehydratase activity 2) is an active-site residue. Positions 3074 to 3215 (AVPVEVADGY…ARPVTDQQLR (142 aa)) are C-terminal hotdog fold 2. Catalysis depends on Asp3135, which acts as the Proton donor; for dehydratase activity 2. The segment at 3395 to 3701 (GTFENLRLEL…QARHTGKVVM (307 aa)) is enoyl reductase 2. Residues 3710–3888 (GTVLITGGTG…AISLGWGLWD (179 aa)) are beta-ketoacyl reductase 2. The active-site For beta-ketoacyl reductase 2 activity is Tyr3858. The Carrier 2 domain occupies 3995-4070 (AVLLDLVRSH…ALAGYMRREL (76 aa)). Ser4030 carries the O-(pantetheine 4'-phosphoryl)serine modification.

In terms of assembly, forms a large supramolecular assembly mediated through specific interactions between the N- and C-terminus linkers.

The catalysed reaction is a medium-chain fatty acyl-CoA + 5 (S)-methylmalonyl-CoA + 5 malonyl-CoA + 22 NADPH + 32 H(+) = a mycoketide-CoA + 10 CO2 + 22 NADP(+) + 10 CoA + 11 H2O. It participates in lipid metabolism; fatty acid metabolism. Involved in the synthesis of beta-D-mannosyl phosphomycoketide (MPM), an antigenic mycobacterial polyketide. Binds a fatty acyl-CoA as a starter unit, and extends it by five rounds of alternative additions of malonyl-CoA and methylmalonyl-CoA extender units. Depending on the starter unit, the enzyme forms mycoketide-CoAs of different lengths. Shows preference for small-/medium-chain starter fatty acyl substrates. Uses a hybrid modularly iterative mechanism, by forming a supramolecular assembly to perform repetitive cycles of iterations. This chain is Mycoketide-CoA synthase, found in Mycobacterium tuberculosis (strain ATCC 25618 / H37Rv).